We begin with the raw amino-acid sequence, 282 residues long: Cyanocobalamin reductase / alkylcobalamin dealkylase (282 aa).

Substrate is bound by residues D104, 115–118, 129–131, C149, and I160; these read ILAQ and YYQ. The disordered stretch occupies residues 234 to 282; it reads LGLAQPSEKPSSPSPDLPFTTPAPKKPGNPSRARSWLSPRVSPPASPGP. A phosphoserine mark is found at S245, S247, S275, and S279.

Belongs to the MMACHC family. As to quaternary structure, monomer in the absence of bound substrate. Homodimer; dimerization is triggered by binding to FMN or adenosylcobalamin. Interacts with LMBRD1 and ABCD4; the interaction ensures the transport of cobalamin from the lysosome to the cytoplasm. Forms a multiprotein complex with MMADHC, MTR and MTRR; the interaction with MTR could modulate MMACHC-dependent processing of cobalamin. Heterodimer with MMADHC; the interaction might play a role in the regulation of the balance between AdoCbl and MeCbl synthesis. The cofactor is FAD. FMN serves as cofactor. As to expression, widely expressed. Expressed at higher level in fetal liver. Also expressed in spleen, lymph node, thymus and bone marrow. Weakly or not expressed in peripheral blood leukocytes.

It is found in the cytoplasm. The protein localises to the cytosol. It catalyses the reaction 2 cob(II)alamin-[cyanocobalamin reductase] + 2 hydrogen cyanide + NADP(+) = 2 cyanocob(III)alamin + 2 apo-[cyanocobalamin reductase] + NADPH + H(+). The catalysed reaction is apo-[alkylcobalamin reductase] + an R-cob(III)alamin + glutathione = cob(I)alamin-[alkylcobalamin reductase] + an S-substituted glutathione + H(+). The enzyme catalyses apo-[alkylcobalamin reductase] + methylcob(III)alamin + glutathione = S-methyl glutathione + cob(I)alamin-[alkylcobalamin reductase] + H(+). It carries out the reaction apo-[alkylcobalamin reductase] + adenosylcob(III)alamin + glutathione = S-adenosylglutathione + cob(I)alamin-[alkylcobalamin reductase] + H(+). In terms of biological role, cobalamin (vitamin B12) cytosolic chaperone that catalyzes the reductive decyanation of cyanocob(III)alamin (cyanocobalamin, CNCbl) to yield cob(II)alamin and cyanide, using FAD or FMN as cofactors and NADPH as cosubstrate. Cyanocobalamin constitutes the inactive form of vitamin B12 introduced from the diet, and is converted into the active cofactors methylcobalamin (MeCbl) involved in methionine biosynthesis, and 5'-deoxyadenosylcobalamin (AdoCbl) involved in the TCA cycle. Forms a complex with the lysosomal transporter ABCD4 and its chaperone LMBRD1, to transport cobalamin across the lysosomal membrane into the cytosol. The processing of cobalamin in the cytosol occurs in a multiprotein complex composed of at least MMACHC, MMADHC, MTRR (methionine synthase reductase) and MTR (methionine synthase) which may contribute to shuttle safely and efficiently cobalamin towards MTR in order to produce methionine. Also acts as a glutathione transferase by catalyzing the dealkylation of the alkylcob(III)alamins MeCbl and AdoCbl, using the thiolate of glutathione for nucleophilic displacement to generate cob(I)alamin and the corresponding glutathione thioether. The conversion of incoming MeCbl or AdoCbl into a common intermediate cob(I)alamin is necessary to meet the cellular needs for both cofactors. Cysteine and homocysteine cannot substitute for glutathione in this reaction. This is Cyanocobalamin reductase / alkylcobalamin dealkylase from Homo sapiens (Human).